The sequence spans 237 residues: Phosphoribosylaminoimidazole-succinocarboxamide synthase (237 aa).

The protein belongs to the SAICAR synthetase family.

It catalyses the reaction 5-amino-1-(5-phospho-D-ribosyl)imidazole-4-carboxylate + L-aspartate + ATP = (2S)-2-[5-amino-1-(5-phospho-beta-D-ribosyl)imidazole-4-carboxamido]succinate + ADP + phosphate + 2 H(+). It functions in the pathway purine metabolism; IMP biosynthesis via de novo pathway; 5-amino-1-(5-phospho-D-ribosyl)imidazole-4-carboxamide from 5-amino-1-(5-phospho-D-ribosyl)imidazole-4-carboxylate: step 1/2. The protein is Phosphoribosylaminoimidazole-succinocarboxamide synthase of Salmonella agona (strain SL483).